Here is a 436-residue protein sequence, read N- to C-terminus: GTPase Der (436 aa).

2 EngA-type G domains span residues 4-167 and 176-351; these read PVVA…KNIP and VQFC…ENHS. GTP contacts are provided by residues 10 to 17, 57 to 61, 119 to 122, 182 to 189, 229 to 233, and 294 to 297; these read GRPNVGKS, DTGGI, NKLD, DTAGM, and NKWD. Residues 352–436 form the KH-like domain; sequence LRVQTNVLND…PIKIFARARK (85 aa).

This sequence belongs to the TRAFAC class TrmE-Era-EngA-EngB-Septin-like GTPase superfamily. EngA (Der) GTPase family. As to quaternary structure, associates with the 50S ribosomal subunit.

Functionally, GTPase that plays an essential role in the late steps of ribosome biogenesis. The protein is GTPase Der of Bacillus velezensis (strain DSM 23117 / BGSC 10A6 / LMG 26770 / FZB42) (Bacillus amyloliquefaciens subsp. plantarum).